We begin with the raw amino-acid sequence, 312 residues long: Methionyl-tRNA formyltransferase (312 aa).

A (6S)-5,6,7,8-tetrahydrofolate-binding site is contributed by 112–115 (SLLP).

Belongs to the Fmt family.

It carries out the reaction L-methionyl-tRNA(fMet) + (6R)-10-formyltetrahydrofolate = N-formyl-L-methionyl-tRNA(fMet) + (6S)-5,6,7,8-tetrahydrofolate + H(+). Attaches a formyl group to the free amino group of methionyl-tRNA(fMet). The formyl group appears to play a dual role in the initiator identity of N-formylmethionyl-tRNA by promoting its recognition by IF2 and preventing the misappropriation of this tRNA by the elongation apparatus. The polypeptide is Methionyl-tRNA formyltransferase (Magnetococcus marinus (strain ATCC BAA-1437 / JCM 17883 / MC-1)).